A 268-amino-acid polypeptide reads, in one-letter code: Phosphatidylglycerol--prolipoprotein diacylglyceryl transferase (268 aa).

The next 7 helical transmembrane spans lie at 27 to 47, 66 to 86, 104 to 124, 130 to 150, 181 to 201, 208 to 228, and 242 to 262; these read PALRWYGFTYLVGFVAAMWLL, LLFYGFLGVILGGRIGYVLFY, GGMSFHGGLIGVITAMIYITW, FFAVADMVAPVVPIGLGAGRI, PSQLYQFALEGVALFLLLYWF, VGAVSGMFLLGYGIFRVIVET, and LMTMGQILSVPMILFGLYLIL. Position 149 (Arg149) interacts with a 1,2-diacyl-sn-glycero-3-phospho-(1'-sn-glycerol).

It belongs to the Lgt family.

The protein resides in the cell inner membrane. The catalysed reaction is L-cysteinyl-[prolipoprotein] + a 1,2-diacyl-sn-glycero-3-phospho-(1'-sn-glycerol) = an S-1,2-diacyl-sn-glyceryl-L-cysteinyl-[prolipoprotein] + sn-glycerol 1-phosphate + H(+). The protein operates within protein modification; lipoprotein biosynthesis (diacylglyceryl transfer). Catalyzes the transfer of the diacylglyceryl group from phosphatidylglycerol to the sulfhydryl group of the N-terminal cysteine of a prolipoprotein, the first step in the formation of mature lipoproteins. This chain is Phosphatidylglycerol--prolipoprotein diacylglyceryl transferase, found in Shewanella oneidensis (strain ATCC 700550 / JCM 31522 / CIP 106686 / LMG 19005 / NCIMB 14063 / MR-1).